Reading from the N-terminus, the 270-residue chain is Nuclease PA3 (270 aa).

The a divalent metal cation site is built by W1, H6, H15, D45, and H60. 1 to 6 (WGALGH) provides a ligand contact to substrate. Residues 45–51 (DEYRLTS), 60–63 (HFID), and 73–78 (NVDYER) contribute to the substrate site. Intrachain disulfides connect C72/C217 and C80/C85. Residue N92 coordinates substrate. The N-linked (GlcNAc...) asparagine glycan is linked to N92. Positions 116, 120, and 126 each coordinate a divalent metal cation. Residues 116 to 164 (HFIGDMTQPLHDEAYAVGGNKINVTFDGYHDNLHSDWDTYMPQKLIGGH) are substrate binding. N-linked (GlcNAc...) asparagine glycosylation is present at N138. 2 residues coordinate a divalent metal cation: H149 and D153. 2 N-linked (GlcNAc...) asparagine glycosylation sites follow: N184 and N197.

This sequence belongs to the nuclease type I family. It depends on Zn(2+) as a cofactor.

Its subcellular location is the secreted. The enzyme catalyses a ribonucleoside 3'-phosphate + H2O = a ribonucleoside + phosphate. Its function is as follows. Hydrolyzes only single-stranded DNA and RNA without apparent specificity for bases. This is Nuclease PA3 from Penicillium sp.